A 224-amino-acid chain; its full sequence is ATP synthase subunit a (224 aa).

The next 6 helical transmembrane spans lie at 17-37 (FIYM…VKMA), 78-98 (LVAT…VPGF), 104-124 (FLEF…YEGI), 136-156 (FLGP…VSHF), 176-196 (FLMV…YALL), and 201-221 (FLQA…AIAV).

The protein belongs to the ATPase A chain family. As to quaternary structure, F-type ATPases have 2 components, CF(1) - the catalytic core - and CF(0) - the membrane proton channel. CF(1) has five subunits: alpha(3), beta(3), gamma(1), delta(1), epsilon(1). CF(0) has three main subunits: a(1), b(2) and c(9-12). The alpha and beta chains form an alternating ring which encloses part of the gamma chain. CF(1) is attached to CF(0) by a central stalk formed by the gamma and epsilon chains, while a peripheral stalk is formed by the delta and b chains.

The protein resides in the cell inner membrane. Its function is as follows. Key component of the proton channel; it plays a direct role in the translocation of protons across the membrane. The chain is ATP synthase subunit a from Sulfurimonas denitrificans (strain ATCC 33889 / DSM 1251) (Thiomicrospira denitrificans (strain ATCC 33889 / DSM 1251)).